Reading from the N-terminus, the 73-residue chain is DNA gyrase inhibitor YacG (73 aa).

The Zn(2+) site is built by Cys-14, Cys-17, Cys-30, and Cys-34. A disordered region spans residues 54–73 (AEQADDTAGPGAAEDDTDSH).

This sequence belongs to the DNA gyrase inhibitor YacG family. Interacts with GyrB. Zn(2+) serves as cofactor.

Its function is as follows. Inhibits all the catalytic activities of DNA gyrase by preventing its interaction with DNA. Acts by binding directly to the C-terminal domain of GyrB, which probably disrupts DNA binding by the gyrase. This Hyphomonas neptunium (strain ATCC 15444) protein is DNA gyrase inhibitor YacG.